A 2377-amino-acid polypeptide reads, in one-letter code: DNA (cytosine-5-)-methyltransferase DMT5 (2377 aa).

The tract at residues 24–56 (GTADGAVNGGNIPNSQSQKRKRASPSPEIESEE) is disordered. The Chromo; shadow subtype domain occupies 62–126 (YEIDYIADSR…KNPGKPRLSP (65 aa)). Positions 150–282 (GKSRAASSTD…KSSLPKAKLR (133 aa)) are disordered. Residues 201 to 213 (PTSKKVHPNKKCK) are compositionally biased toward basic residues. 2 stretches are compositionally biased toward acidic residues: residues 217–238 (DDESDFVFEEGEWDEDEDDDND) and 245–263 (EDDEDDEQERSAEEPESDE). Residues 268–282 (PAKKTKSSLPKAKLR) are compositionally biased toward basic residues. An SAM-dependent MTase C5-type domain is found at 347–753 (LRVATMCSGT…IAALKVACHK (407 aa)). Residue C440 is part of the active site. Residues 1450 to 1771 (AERPVMVRGG…RSIATFMGIH (322 aa)) enclose the Helicase ATP-binding domain. ATP is bound at residue 1463 to 1470 (DQVGYGKT). Disordered regions lie at residues 1642-1680 (KGQAYRDKHDSDSKAKPITKEELERWEASEDEDDDENSK), 2313-2334 (KGRGSSISMTNEKRTPTLTVKS), and 2347-2377 (SSFRSKKRSMEARDAEGVSDDDENSELSDII). The span at 1645–1669 (AYRDKHDSDSKAKPITKEELERWEA) shows a compositional bias: basic and acidic residues. The Helicase C-terminal domain maps to 2152-2315 (KLEHLVNLIH…EIPQEEYKGR (164 aa)). Positions 2317 to 2334 (SSISMTNEKRTPTLTVKS) are enriched in polar residues. A compositionally biased stretch (acidic residues) spans 2363-2377 (GVSDDDENSELSDII).

In the N-terminal section; belongs to the class I-like SAM-binding methyltransferase superfamily. C5-methyltransferase family. This sequence in the C-terminal section; belongs to the SNF2/RAD54 helicase family. As to quaternary structure, interacts with SWI6. Requires Mg(2+) as cofactor.

Its subcellular location is the nucleus. It is found in the chromosome. It carries out the reaction a 2'-deoxycytidine in DNA + S-adenosyl-L-methionine + ATP + H2O = a 5-methyl-2'-deoxycytidine in DNA + S-adenosyl-L-homocysteine + ADP + phosphate + 2 H(+). Its activity is regulated as follows. Hemimethylated DNA substrates stimulate ATP hydrolysis and this is a prerequisite for methyltransferase activity. ATP-dependent cytosine methylase that maintains DNA methylation by acting at hemimethylated palindromic 5'-CG-3' sites to produce symmetrically methylated DNA strands. DNA methylation may play a role in transcriptional silencing, particularly at transposable elements. The protein is DNA (cytosine-5-)-methyltransferase DMT5 of Cryptococcus neoformans var. grubii serotype A (strain H99 / ATCC 208821 / CBS 10515 / FGSC 9487) (Filobasidiella neoformans var. grubii).